The primary structure comprises 535 residues: Berberine bridge enzyme-like 3 (535 aa).

Positions 1–19 (MKEALFGLYLVLLVSGLEA) are cleaved as a signal peptide. A disulfide bridge connects residues Cys-32 and Cys-95. Residue Asn-52 is glycosylated (N-linked (GlcNAc...) asparagine). The FAD-binding PCMH-type domain occupies 73-247 (NNKNLLAIVV…LSWKINLVEV (175 aa)). Residues 110-172 (HDNEGLSYVS…QTLAFPAGIC (63 aa)) constitute a cross-link (6-(S-cysteinyl)-8alpha-(pros-histidyl)-FAD (His-Cys)). N-linked (GlcNAc...) asparagine glycans are attached at residues Asn-214, Asn-257, Asn-292, Asn-321, Asn-341, Asn-415, Asn-439, and Asn-444.

It belongs to the oxygen-dependent FAD-linked oxidoreductase family. The cofactor is FAD. The FAD cofactor is bound via a bicovalent 6-S-cysteinyl, 8alpha-N1-histidyl FAD linkage.

It is found in the endoplasmic reticulum. The protein localises to the cell membrane. It localises to the secreted. Its subcellular location is the cell wall. Functionally, flavin-dependent oxidoreductase involved in the biosynthetic pathway to 4-hydroxyindole-3-carbonyl nitrile (4-OH-ICN), a cyanogenic metabolite required for inducible pathogen defense. Converts indole cyanohydrin into indole-3-carbonyl nitrile (ICN). This is Berberine bridge enzyme-like 3 from Arabidopsis thaliana (Mouse-ear cress).